We begin with the raw amino-acid sequence, 718 residues long: Threonine--tRNA ligase, mitochondrial (718 aa).

Phosphoserine is present on Ser52. One can recognise a TGS domain in the interval 55–121 (QKEPRTIKIS…ETDSDLRFLT (67 aa)).

This sequence belongs to the class-II aminoacyl-tRNA synthetase family. As to quaternary structure, homodimer.

The protein localises to the mitochondrion matrix. It carries out the reaction tRNA(Thr) + L-threonine + ATP = L-threonyl-tRNA(Thr) + AMP + diphosphate + H(+). In terms of biological role, catalyzes the attachment of threonine to tRNA(Thr) in a two-step reaction: threonine is first activated by ATP to form Thr-AMP and then transferred to the acceptor end of tRNA(Thr). Also edits incorrectly charged tRNA(Thr) via its editing domain. The protein is Threonine--tRNA ligase, mitochondrial (TARS2) of Homo sapiens (Human).